We begin with the raw amino-acid sequence, 80 residues long: WAP four-disulfide core domain protein 15A (80 aa).

Positions 1–20 (MKPSSLLLFTTTILLCLSMA) are cleaved as a signal peptide. Residues 29-76 (VTPKQGYCPEFLLDCPFVLLPVCSRDKGCKGTKKCCFYYCQMRCVEPW) form the WAP domain. 4 cysteine pairs are disulfide-bonded: Cys36–Cys64, Cys43–Cys68, Cys51–Cys63, and Cys57–Cys72.

It is found in the secreted. Its function is as follows. Antibacterial protein. The protein is WAP four-disulfide core domain protein 15A of Mus musculus (Mouse).